We begin with the raw amino-acid sequence, 379 residues long: UDP-4-amino-4-deoxy-L-arabinose--oxoglutarate aminotransferase (379 aa).

Residue Lys182 is modified to N6-(pyridoxal phosphate)lysine.

This sequence belongs to the DegT/DnrJ/EryC1 family. ArnB subfamily. Homodimer. Requires pyridoxal 5'-phosphate as cofactor.

The catalysed reaction is UDP-4-amino-4-deoxy-beta-L-arabinose + 2-oxoglutarate = UDP-beta-L-threo-pentopyranos-4-ulose + L-glutamate. Its pathway is nucleotide-sugar biosynthesis; UDP-4-deoxy-4-formamido-beta-L-arabinose biosynthesis; UDP-4-deoxy-4-formamido-beta-L-arabinose from UDP-alpha-D-glucuronate: step 2/3. It functions in the pathway bacterial outer membrane biogenesis; lipopolysaccharide biosynthesis. Its function is as follows. Catalyzes the conversion of UDP-4-keto-arabinose (UDP-Ara4O) to UDP-4-amino-4-deoxy-L-arabinose (UDP-L-Ara4N). The modified arabinose is attached to lipid A and is required for resistance to polymyxin and cationic antimicrobial peptides. This is UDP-4-amino-4-deoxy-L-arabinose--oxoglutarate aminotransferase from Salmonella choleraesuis (strain SC-B67).